Reading from the N-terminus, the 857-residue chain is Zinc finger protein 574 (857 aa).

14 consecutive C2H2-type zinc fingers follow at residues 15 to 37, 58 to 80, 99 to 121, 206 to 228, 297 to 319, 324 to 346, 352 to 374, 380 to 401, 428 to 451, 457 to 479, 485 to 507, 513 to 535, 541 to 563, and 569 to 591; these read YVCS…QQSH, YQCL…QELH, YECP…RYTH, YKCS…QGTH, FSCG…QISH, FSCP…LKSH, YLCV…RRSH, FTCE…RRVH, FHCD…RFVH, HKCP…MLTH, YSCT…RLTH, YKCQ…QYVH, YKCN…QYHH, and YKCQ…QLGH. The segment at 597-619 adopts a C2H2-type 15; degenerate zinc-finger fold; sequence HRCRECGTNFPSVQRLQDHRCSK. 5 C2H2-type zinc fingers span residues 628-651, 681-703, 709-731, 737-759, and 765-787; these read LECP…AAQH, LECS…RRIH, YPCP…RRLH, FKCD…KRIH, and HSCP…RKLH. The segment at 648–678 is disordered; sequence AAQHSGNKRSNVSSGKGTPVLPRNKLKGGGG. The span at 651-663 shows a compositional bias: polar residues; sequence HSGNKRSNVSSGK.

The protein belongs to the krueppel C2H2-type zinc-finger protein family.

Its subcellular location is the nucleus. May be involved in transcriptional regulation. This chain is Zinc finger protein 574 (znf574), found in Xenopus tropicalis (Western clawed frog).